The sequence spans 366 residues: G-protein coupled receptor 183 (366 aa).

At 1 to 37 the chain is on the extracellular side; that stretch reads MQVMRTFNQPPTSSHPTPTLNDSDTCITLYNHRGYAR. N-linked (GlcNAc...) asparagine glycosylation occurs at Asn21. The chain crosses the membrane as a helical span at residues 38–63; sequence VLMPLFYCIVFFVGLLGNALAFHIIR. Residues 64–83 lie on the Cytoplasmic side of the membrane; the sequence is PNVKKINSTTLYSANLVISD. A helical membrane pass occupies residues 84–101; that stretch reads ILFTLSLPLRIIYYALGF. Residues 102–111 lie on the Extracellular side of the membrane; it reads HWPLGETLCK. Cysteines 110 and 188 form a disulfide. The chain crosses the membrane as a helical span at residues 112 to 133; it reads IVGLIFYINTYAGVNFMTCLSV. Residues 134-155 lie on the Cytoplasmic side of the membrane; the sequence is DRFIAVVLPLRFARFRKVSNVR. A helical membrane pass occupies residues 156–174; it reads YICVGVWLLVLMQTLPLLS. The Extracellular segment spans residues 175 to 199; sequence MPMTNEEPDGFITCMEYPNFEPVPN. A helical transmembrane segment spans residues 200–222; the sequence is ISYILIGAVFLGYGVPVVTILVC. Residues 223–248 are Cytoplasmic-facing; the sequence is YSILCCKLRLAAKANQLTDKSGRSQK. A helical membrane pass occupies residues 249 to 272; sequence AIGVICCVSLVFVVCFSPYHIDLL. The Extracellular segment spans residues 273 to 292; the sequence is QYMIRKLIYTPDCAELTAFQ. Residues 293-317 traverse the membrane as a helical segment; that stretch reads ISLHFTVCLMNLNSCLDPFIYFFAC. The Cytoplasmic portion of the chain corresponds to 318 to 366; that stretch reads KGYKTKVLKILKRQVSVSFSSAARTLPEGLSRDISDGNKIHLNSTRHKE.

This sequence belongs to the G-protein coupled receptor 1 family.

The protein resides in the cell membrane. G-protein coupled receptor expressed in lymphocytes that acts as a chemotactic receptor for B-cells, T-cells, splenic dendritic cells, monocytes/macrophages and astrocytes. Receptor for oxysterol 7-alpha,25-dihydroxycholesterol (7-alpha,25-OHC) and other related oxysterols. Mediates cell positioning and movement of a number of cells by binding the 7-alpha,25-OHC ligand that forms a chemotactic gradient. Binding of 7-alpha,25-OHC mediates the correct localization of B-cells during humoral immune responses. In Salmo salar (Atlantic salmon), this protein is G-protein coupled receptor 183 (gpr183).